Reading from the N-terminus, the 457-residue chain is Protein trichome birefringence-like 4 (457 aa).

Residues 19–37 traverse the membrane as a helical; Signal-anchor for type II membrane protein segment; it reads IFLTSLFFLSLFLLSSSSL. The short motif at 173–175 is the GDS motif element; it reads GDS. Residues 420–434 carry the DCXHWCLPGXXDXWN motif motif; the sequence is DCSHWCLPGVPDSWN.

It belongs to the PC-esterase family. TBL subfamily.

It is found in the membrane. Functionally, may act as a bridging protein that binds pectin and other cell wall polysaccharides. Probably involved in maintaining esterification of pectins. May be involved in the specific O-acetylation of cell wall polymers. The protein is Protein trichome birefringence-like 4 (TBL4) of Arabidopsis thaliana (Mouse-ear cress).